Here is a 1202-residue protein sequence, read N- to C-terminus: MGREQDLILAVKNGDVTGVQKLVAKVKATKTKLLGSTKRLNVNYQDADGFSALHHAALGGSLELIALLLEAQATVDIKDSNGMRPLHYAAWQGRLEPVRLLLRASAAVNAASLDGQIPLHLAAQYGHYEVSEMLLQHQSNPCLVNKAKKTPLDLACEFGRLKVAQLLLNSHLCVALLEGEAKDPCDPNYTTPLHLAAKNGHREVIRQLLRAGIEINRQTKTGTALHEAALYGKTEVVRLLLEGGVDVNIRNTYNQTALDIVNQFTTSQASREIKQLLREASGILKVRALKDFWNLHDPTALNVRAGDVITVLEQHPDGRWKGHIHESQRGTDRIGYFPPGIVEVVSKRVGIPAARLPSAPTPLRPGFSRTPQPPAEEPPHPLTYSQLPRVGLSPDSPAGDRNSVGSEGSVGSIRSAGSGQSSEGTNGHGPGLLIENAQPLPSAGEDQVLPGLHPPSLADNLSHRPLANCRSGEQIFTQDVRPEQLLEGKDAQAIHNWLSEFQLEGYTAHFLQAGYDVPTISRMTPEDLTAIGVTKPGHRKKIASEIAQLSIAEWLPSYIPTDLLEWLCALGLPQYHKQLVSSGYDSMGLVADLTWEELQEIGVNKLGHQKKLMLGVKRLAELRRGLLQGEALSEGGRRLAKGPELMAIEGLENGEGPATAGPRLLTFQGSELSPELQAAMAGGGPEPLPLPPARSPSQESIGARSRGSGHSQEQPAPQPSGGDPSPPQERNLPEGTERPPKLCSSLPGQGPPPYVFMYPQGSPSSPAPGPPPGAPWAFSYLAGPPATPPDPPRPKRRSHSLSRPGPTEGDAEGEAEGPVGSTLGSYATLTRRPGRSALVRTSPSVTPTPARGTPRSQSFALRARRKGPPPPPPKRLSSVSGPSPEPPPLDESPGPKEGATGPRRRTLSEPAGPSEPPGPPAPAGPASDTEEEEPGPEGTPPSRGSSGEGLPFAEEGNLTIKQRPKPAGPPPRETPVPPGLDFNLTESDTVKRRPKCREREPLQTALLAFGVASATPGPAAPLPSPTPGESPPASSLPQPEPSSLPAQGVPTPLAPSPAMQPPVPPCPGPGLESSAASRWNGETEPPAAPAALLKVPGAGTAPKPVSVACTQLAFSGPKLAPRLGPRPVPPPRPESTGTVGPGQAQQRLEQTSSSLAAALRAAEKSIGTKEQEGTPSASTKHILDDISTMFDALADQLDAMLD.

6 ANK repeats span residues 48–77 (DGFSALHHAALGGSLELIALLLEAQATVDI), 81–110 (NGMRPLHYAAWQGRLEPVRLLLRASAAVNA), 114–143 (DGQIPLHLAAQYGHYEVSEMLLQHQSNPCL), 147–176 (AKKTPLDLACEFGRLKVAQLLLNSHLCVAL), 188–217 (NYTTPLHLAAKNGHREVIRQLLRAGIEINR), and 220–249 (KTGTALHEAALYGKTEVVRLLLEGGVDVNI). Position 253 is a phosphotyrosine (Tyr253). One can recognise an SH3 domain in the interval 281-347 (SGILKVRALK…PPGIVEVVSK (67 aa)). Residues 355 to 460 (RLPSAPTPLR…GLHPPSLADN (106 aa)) form a disordered region. Phosphoserine is present on residues Ser358, Ser393, Ser396, Ser403, Ser406, and Ser409. The span at 415–425 (SAGSGQSSEGT) shows a compositional bias: polar residues. Phosphoserine is present on Ser471. 2 SAM domains span residues 489-552 (KDAQ…LSIA) and 558-622 (YIPT…LAEL). Disordered stretches follow at residues 676–1104 (LQAA…APKP) and 1116–1181 (GPKL…STKH). A Phosphoserine modification is found at Ser725. Basic and acidic residues predominate over residues 731–740 (NLPEGTERPP). Residues 765–774 (SPAPGPPPGA) are compositionally biased toward pro residues. Residues Ser858, Ser877, Ser878, and Ser892 each carry the phosphoserine modification. Pro residues predominate over residues 913–923 (PSEPPGPPAPA). Positions 940-949 (PPSRGSSGEG) are enriched in low complexity. Pro residues-rich tracts occupy residues 966 to 978 (PAGPPPRETPVPP) and 1018 to 1030 (PAAPLPSPTPGES). Positions 1031–1051 (PPASSLPQPEPSSLPAQGVPT) are enriched in low complexity. Pro residues-rich tracts occupy residues 1052–1068 (PLAPSPAMQPPVPPCPG) and 1124–1133 (GPRPVPPPRP). Residues 1135 to 1151 (STGTVGPGQAQQRLEQT) show a composition bias toward polar residues. Positions 1161-1172 (AAEKSIGTKEQE) are enriched in basic and acidic residues.

As to quaternary structure, may not bind CASK.

The protein resides in the cytoplasm. The chain is Caskin-2 (CASKIN2) from Homo sapiens (Human).